A 995-amino-acid polypeptide reads, in one-letter code: UPF0182 protein MUL_2505 (995 aa).

The next 7 membrane-spanning stretches (helical) occupy residues 18-38 (VLIL…RLID), 63-83 (FLVF…GLAL), 113-133 (LFGI…AQSY), 175-195 (FVAI…FGGI), 210-230 (IQLV…YWLN), 259-279 (KLIL…AIVL), and 287-307 (IGLV…PMIV). Residues 900 to 947 (AATGIQPTEGGAPANVPPNNAPSPEALPGTPPSPPTAVPPAPEASVTL) are disordered. The segment covering 928 to 941 (GTPPSPPTAVPPAP) has biased composition (pro residues).

Belongs to the UPF0182 family.

The protein resides in the cell membrane. This Mycobacterium ulcerans (strain Agy99) protein is UPF0182 protein MUL_2505.